A 20-amino-acid polypeptide reads, in one-letter code: Chemoheterotroph-specific protein (20 aa).

In Thiomonas delicata (Thiomonas cuprina), this protein is Chemoheterotroph-specific protein.